Consider the following 536-residue polypeptide: Light-independent protochlorophyllide reductase subunit B (536 aa).

Asp-36 lines the [4Fe-4S] cluster pocket. Asp-274 acts as the Proton donor in catalysis. 409-410 (GL) contacts substrate. The tract at residues 426–448 (DEAGPSHHGGKAVPASAPRADEA) is disordered.

It belongs to the ChlB/BchB/BchZ family. In terms of assembly, protochlorophyllide reductase is composed of three subunits; BchL, BchN and BchB. Forms a heterotetramer of two BchB and two BchN subunits. The cofactor is [4Fe-4S] cluster.

It catalyses the reaction chlorophyllide a + oxidized 2[4Fe-4S]-[ferredoxin] + 2 ADP + 2 phosphate = protochlorophyllide a + reduced 2[4Fe-4S]-[ferredoxin] + 2 ATP + 2 H2O. The protein operates within porphyrin-containing compound metabolism; bacteriochlorophyll biosynthesis (light-independent). In terms of biological role, component of the dark-operative protochlorophyllide reductase (DPOR) that uses Mg-ATP and reduced ferredoxin to reduce ring D of protochlorophyllide (Pchlide) to form chlorophyllide a (Chlide). This reaction is light-independent. The NB-protein (BchN-BchB) is the catalytic component of the complex. This Cereibacter sphaeroides (strain KD131 / KCTC 12085) (Rhodobacter sphaeroides) protein is Light-independent protochlorophyllide reductase subunit B.